Here is a 147-residue protein sequence, read N- to C-terminus: uncharacterized protein (147 aa).

Positions 30–102 (GRCEQVALSS…TPPTRPESIF (73 aa)) are disordered. A compositionally biased stretch (polar residues) spans 62-71 (RPSTGETFVQ).

This is an uncharacterized protein from Homo sapiens (Human).